The chain runs to 339 residues: MPSASDHSFSFPILIGDIGGTNARFALLVDAASEPTQLPPVKTGDFATIEDALQNGIFNKISVRPRSAILAVAGPIKSDEIPLTNAGWVIRPKDMLARLGLEDVLVINDFEAQALAIAAPADQDVVQIGGGSVRPRSSRVVLGPGTGLGVAGLVFAQDTWIPVPGEGGHVDIGPRTERDFRIWPFLDPIEGRMAGEQILCGRGIMNLYRAVCAADGVEPLFKDQAEVTTSALSGDDPAAIETVTLFATYLGRVAGDMALVFMARGGVFLAGGISQKILPALMRPDFRAAFEDKAPHSALMRTIPTFAVVHPMAALSGLAAFARAPRDFGVAMEGRRWRS.

Residue 16–21 (GDIGGT) participates in ATP binding.

This sequence belongs to the bacterial glucokinase family.

It is found in the cytoplasm. The catalysed reaction is D-glucose + ATP = D-glucose 6-phosphate + ADP + H(+). The polypeptide is Glucokinase (Sinorhizobium fredii (strain NBRC 101917 / NGR234)).